Here is a 651-residue protein sequence, read N- to C-terminus: Acetyl-coenzyme A synthetase (651 aa).

Residues Arg189 to Lys192, Thr311, and Asn335 each bind CoA. Residues Gly387 to Pro389, Asp411 to Thr416, Asp500, and Arg515 contribute to the ATP site. Ser523 lines the CoA pocket. Arg526 lines the ATP pocket. The Mg(2+) site is built by Val537, His539, and Val542. Residue Arg584 coordinates CoA. N6-acetyllysine is present on Lys609.

This sequence belongs to the ATP-dependent AMP-binding enzyme family. Requires Mg(2+) as cofactor. Acetylated. Deacetylation by the SIR2-homolog deacetylase activates the enzyme.

The enzyme catalyses acetate + ATP + CoA = acetyl-CoA + AMP + diphosphate. In terms of biological role, catalyzes the conversion of acetate into acetyl-CoA (AcCoA), an essential intermediate at the junction of anabolic and catabolic pathways. AcsA undergoes a two-step reaction. In the first half reaction, AcsA combines acetate with ATP to form acetyl-adenylate (AcAMP) intermediate. In the second half reaction, it can then transfer the acetyl group from AcAMP to the sulfhydryl group of CoA, forming the product AcCoA. The sequence is that of Acetyl-coenzyme A synthetase from Allorhizobium ampelinum (strain ATCC BAA-846 / DSM 112012 / S4) (Agrobacterium vitis (strain S4)).